Consider the following 834-residue polypeptide: MWARNLMARALYDNVPECAEELAFRKGDILTVIEQNTGGLEGWWLCSLHGRQGIVPGNRVKLLIGPIQETPSGQDQPTSGLMHQTFGQQKLYQVPNPHSAPRDTIYQVPPSYQHQGIYQVPTSHGIQEQDVYQVPPSVQRSIGAANGPHLSKKVVTPVRTGQGYVYEYPSRHQKDIYDIPPSHTTQGVYDIPPSSVKVPVFSLPVGEIKPQGVYDIPPTKGLYAIPPSACRDEAGLREKEYDFPPPMRQAGRLDVRPEGVYDIPPTSTKPTGKDLHIKYNCDAPGAAELATRRHQSVLLNHAPSQLGQSPGAQNDAYDVPRGVQFLEPPAETSEKANPEERDGVYDVPLHNPPDAKGSQDVVDGMNRLSFSSTGSTRSNMSTSSTTSKESSVSASPSQDKRLLLDPDTAIERLHRLQQTLEVGVSSLMALVTTDWRCYGYMDRHINEIRTSVDKVELFVRDYLHFARGAVANASCLPELTLHNKMKRELQRVEDSHQILSQTSHDLNECSWSLNILAVNKPQNKCDDLDRFVMVAKTVPDDAKQLTTTINTNAEALFRPGPGSSHVKSGSENIMNSTEYPHAASQMPLLHPGDHKAQGLNKPLPPSLGKDQPPDCSSSDGSERSWMDDYDYVHLQGKEEFERQQKELLEKENIIKQNKLQLEHHQLSQFQLLEQEITKPVENDISKWKPSQSLPTTNSSVGAQDRQLLCFYYDQCETHYISLLNAIDALFSCVSSAQPPRIFVAHSKFVILSAHKLVFIGDTLTRQVAAQDICHKVMNSSNQLCEQLKTIVMATKMAALHYPSTTALQEMVHQVTDLSRNAQLFKRSLLEMATF.

The SH3 domain occupies 3–65 (ARNLMARALY…PGNRVKLLIG (63 aa)). A phosphotyrosine mark is found at tyrosine 92, tyrosine 164, tyrosine 166, tyrosine 177, tyrosine 189, tyrosine 214, and tyrosine 223. At serine 296 the chain carries Phosphoserine. The residue at position 317 (tyrosine 317) is a Phosphotyrosine. Disordered regions lie at residues 328-402 (PPAE…DKRL) and 584-624 (SQMP…SERS). A compositionally biased stretch (basic and acidic residues) spans 332 to 344 (TSEKANPEERDGV). Residues 360-363 (DVVD) carry the Caspase cleavage related site motif. Low complexity predominate over residues 368–397 (LSFSSTGSTRSNMSTSSTTSKESSVSASPS). Serine 369 is modified (phosphoserine). The divergent helix-loop-helix motif stretch occupies residues 710–760 (FYYDQCETHYISLLNAIDALFSCVSSAQPPRIFVAHSKFVILSAHKLVFIG). The segment at 710 to 834 (FYYDQCETHY…KRSLLEMATF (125 aa)) is required for interaction with PLK1. At serine 780 the chain carries Phosphoserine. Phosphothreonine is present on threonine 804.

The protein belongs to the CAS family. Homodimer. Forms heterodimers with BCAR1/p130cas. Forms complexes with PTK2B/RAFTK, adapter protein CRKL and LYN kinase. Part of a complex composed of NEDD9, AURKA and CTTN; within the complex NEDD9 acts as a scaffold protein and is required for complex formation. Part of a ternary complex composed of SMAD3, ITCH/AIP4 and NEDD9/HEF1; within the complex NEDD9/HEF1 interacts (via N-terminus) with ITCH/AIP4; the complex mediates ubiquitination and proteasomal degradation of NEDD9/HEF1. Interacts with ID2. Interacts with CTTN (via N-terminus). Interacts with MICAL. Interacts with TXNL4/DIM1. Interacts with BCAR3 (via Ras-GEF domain). Interacts with SH2D3C isoform 1 and isoform 2. Interacts with BCAR3. Interacts with ECT2. Interacts with PTPN11/SHP-2 (via SH2 domains); the interaction is enhanced when NEDD9/CAS-L is tyrosine phosphorylated. Interacts (via C-terminus) with PLK1 (via polo box domain). Interacts with NKX2-5. Interacts with SMAD3; the interaction is inhibited by oxidation of NEDD9. Interacts with ABL1; interaction is induced by CXCL12-mediated phosphorylation of NEDD/HEF1. Interacts (via SH3 domain) with PTK2/FAK. Interacts with FYN; in the presence of PTK2. Interacts with INPPL1/SHIP2. In terms of processing, polyubiquitinated by ITCH/AIP4, leading to proteasomal degradation. PTK2/FAK1 phosphorylates the protein at the YDYVHL motif (conserved among all cas proteins) following integrin stimulation. The SRC family kinases (FYN, SRC, LCK and CRK) are recruited to the phosphorylated sites and can phosphorylate other tyrosine residues. Ligation of either integrin beta-1 or B-cell antigen receptor on tonsillar B-cells and B-cell lines promotes tyrosine phosphorylation and both integrin and BCR-mediated tyrosine phosphorylation requires an intact actin network. Phosphorylation is required to recruit NEDD9 to T-cell receptor microclusters at the periphery of newly formed immunological synapses. In fibroblasts transformation with oncogene v-ABL results in an increase in tyrosine phosphorylation. Transiently phosphorylated following CD3 cross-linking and this phosphorylated form binds to CRKL and C3G. A mutant lacking the SH3 domain is phosphorylated upon CD3 cross-linking but not upon integrin beta-1 cross-linking. Tyrosine phosphorylation occurs upon stimulation of the G-protein coupled C1a calcitonin receptor. Calcitonin-stimulated tyrosine phosphorylation is mediated by calcium- and protein kinase C-dependent mechanisms and requires the integrity of the actin cytoskeleton. Phosphorylation at Ser-369 induces proteasomal degradation. Phosphorylated by LYN. Phosphorylation at Ser-780 by CSNK1D or CSNK1E, or phosphorylation of Thr-804 by CSNK1E enhances the interaction of NEDD9 with PLK1.

It is found in the cytoplasm. The protein localises to the cell cortex. Its subcellular location is the nucleus. It localises to the golgi apparatus. The protein resides in the cell projection. It is found in the lamellipodium. The protein localises to the cell junction. Its subcellular location is the focal adhesion. It localises to the cytoskeleton. The protein resides in the spindle pole. It is found in the cilium. The protein localises to the cilium basal body. Its subcellular location is the basolateral cell membrane. Its function is as follows. Negatively regulates embryonic fibroblast migration. May play an important role in integrin beta-1 or B cell antigen receptor (BCR) mediated signaling in B- and T-cells. Integrin beta-1 stimulation leads to recruitment of various proteins including CRKl and SHPTP2 to the tyrosine phosphorylated form. Promotes adhesion and migration of lymphocytes; as a result required for the correct migration of lymphocytes to the spleen and other secondary lymphoid organs. Plays a role in the organization of T-cell F-actin cortical cytoskeleton and the centralization of T-cell receptor microclusters at the immunological synapse. Negatively regulates cilia outgrowth in polarized cysts. Modulates cilia disassembly via activation of AURKA-mediated phosphorylation of HDAC6 and subsequent deacetylation of alpha-tubulin. In conjunction with NKX2-5, positively regulates transcription of genes such as COL3A1 and MMP2, resulting in increased pulmonary endothelial fibrosis in response to hypoxia. Positively regulates RANKL-induced osteoclastogenesis. Required for the maintenance of hippocampal dendritic spines in the dentate gyrus and CA1 regions, thereby involved in spatial learning and memory. The chain is Enhancer of filamentation 1 from Canis lupus familiaris (Dog).